The following is a 194-amino-acid chain: dITP/XTP pyrophosphatase (194 aa).

Position 7-12 (7-12 (SGNVNK)) interacts with substrate. Positions 38 and 67 each coordinate Mg(2+). The active-site Proton acceptor is Asp-67. Residues Ser-68, 151–154 (FGYD), Lys-174, and 179–180 (HR) contribute to the substrate site.

Belongs to the HAM1 NTPase family. Homodimer. Requires Mg(2+) as cofactor.

It catalyses the reaction XTP + H2O = XMP + diphosphate + H(+). The enzyme catalyses dITP + H2O = dIMP + diphosphate + H(+). It carries out the reaction ITP + H2O = IMP + diphosphate + H(+). In terms of biological role, pyrophosphatase that catalyzes the hydrolysis of nucleoside triphosphates to their monophosphate derivatives, with a high preference for the non-canonical purine nucleotides XTP (xanthosine triphosphate), dITP (deoxyinosine triphosphate) and ITP. Seems to function as a house-cleaning enzyme that removes non-canonical purine nucleotides from the nucleotide pool, thus preventing their incorporation into DNA/RNA and avoiding chromosomal lesions. This chain is dITP/XTP pyrophosphatase, found in Treponema denticola (strain ATCC 35405 / DSM 14222 / CIP 103919 / JCM 8153 / KCTC 15104).